A 214-amino-acid polypeptide reads, in one-letter code: Adenylate kinase (214 aa).

Residue 10-15 (GAGKGT) participates in ATP binding. The tract at residues 30-59 (STGDMLRAAVKAGSELGLKAKEIMDAGKLV) is NMP. Residues T31, R36, 57–59 (KLV), 85–88 (GFPR), and Q92 contribute to the AMP site. The interval 122–159 (GRRVHAASGRVYHVKFNPPKVEDKDDVTGEDLTIRKDD) is LID. ATP is bound by residues R123 and 132-133 (VY). AMP contacts are provided by R156 and R167. R200 is a binding site for ATP.

The protein belongs to the adenylate kinase family. In terms of assembly, monomer.

Its subcellular location is the cytoplasm. It carries out the reaction AMP + ATP = 2 ADP. Its pathway is purine metabolism; AMP biosynthesis via salvage pathway; AMP from ADP: step 1/1. Its function is as follows. Catalyzes the reversible transfer of the terminal phosphate group between ATP and AMP. Plays an important role in cellular energy homeostasis and in adenine nucleotide metabolism. The protein is Adenylate kinase of Yersinia enterocolitica serotype O:8 / biotype 1B (strain NCTC 13174 / 8081).